A 60-amino-acid chain; its full sequence is UPF0434 protein Pnap_1922 (60 aa).

This sequence belongs to the UPF0434 family.

The sequence is that of UPF0434 protein Pnap_1922 from Polaromonas naphthalenivorans (strain CJ2).